We begin with the raw amino-acid sequence, 100 residues long: Putative sodium channel toxin Ts26 (100 aa).

The N-terminal stretch at 1-22 is a signal peptide; sequence MVKSAMKIVILILFVLLIRVES. The 69-residue stretch at 24–92 folds into the LCN-type CS-alpha/beta domain; the sequence is RNGYPDISDG…VMDTTIEYCE (69 aa). 4 disulfides stabilise this stretch: Cys38–Cys64, Cys50–Cys69, Cys54–Cys71, and Cys65–Cys91.

Belongs to the long (4 C-C) scorpion toxin superfamily. Sodium channel inhibitor family. Expressed by the venom gland.

It localises to the secreted. Its function is as follows. Putative sodium channel toxin. The sequence is that of Putative sodium channel toxin Ts26 from Tityus serrulatus (Brazilian scorpion).